A 231-amino-acid chain; its full sequence is MLKLQKKLKNDYGLVFNDEYLLKTAFTHSSFTNEERLPKIANNERLEFLGDVALSLVISDYLYRTYPEKLEGELSKMRSSIVRTESLANFSRSCGFGEFLRLGHGEEKMGGRDRETTLENLFEAFLGALFIDQGMDEVRKFIQHVVIPHVKNDDYVKVIDYKTELQEVLQIGGETTISYKILKEEGPAHDRSFVAAVFNNGKELGRGLGKSKKVAEQKAAENAIKGQNHVS.

The region spanning 5–134 (QKKLKNDYGL…FLGALFIDQG (130 aa)) is the RNase III domain. Position 47 (Glu47) interacts with Mg(2+). The active site involves Asp51. Mg(2+) is bound by residues Asn120 and Glu123. Glu123 is a catalytic residue. The DRBM domain occupies 160 to 229 (DYKTELQEVL…AENAIKGQNH (70 aa)).

This sequence belongs to the ribonuclease III family. As to quaternary structure, homodimer. Requires Mg(2+) as cofactor.

The protein localises to the cytoplasm. It catalyses the reaction Endonucleolytic cleavage to 5'-phosphomonoester.. Its function is as follows. Digests double-stranded RNA. Involved in the processing of primary rRNA transcript to yield the immediate precursors to the large and small rRNAs (23S and 16S). Processes some mRNAs, and tRNAs when they are encoded in the rRNA operon. Processes pre-crRNA and tracrRNA of type II CRISPR loci if present in the organism. In Lactococcus lactis subsp. cremoris (strain MG1363), this protein is Ribonuclease 3.